Consider the following 163-residue polypeptide: Inner membrane protein YcdZ (163 aa).

At 1-2 the chain is on the cytoplasmic side; that stretch reads MN. A helical transmembrane segment spans residues 3–23; that stretch reads ILLSIAITTGILSGIWGWVAV. Position 24 (Ser-24) is a topological domain, periplasmic. The helical transmembrane segment at 25 to 45 threads the bilayer; sequence LGLLSWAGFLGCTAYFACPQG. Over 46–48 the chain is Cytoplasmic; sequence GLK. A helical membrane pass occupies residues 49 to 69; the sequence is GLAISAATLLSGVVWAMVIIY. Over 70–71 the chain is Periplasmic; the sequence is GS. Residues 72-92 traverse the membrane as a helical segment; the sequence is ALAPHLEILGYVITGIVAFLM. Over 93–98 the chain is Cytoplasmic; that stretch reads CIQAKQ. A helical transmembrane segment spans residues 99-119; that stretch reads LLLSFVPGTFIGACATFAGQG. Residues 120 to 122 are Periplasmic-facing; sequence DWK. A helical transmembrane segment spans residues 123-143; sequence LVLPSLALGLIFGYAMKNSGL. Residues 144–163 lie on the Cytoplasmic side of the membrane; it reads WLAARSAKTAHREQEIKNKA.

The protein to E.coli YahC.

Its subcellular location is the cell inner membrane. This chain is Inner membrane protein YcdZ (ycdZ), found in Escherichia coli (strain K12).